Consider the following 532-residue polypeptide: Glucose-6-phosphate isomerase (532 aa).

E322 serves as the catalytic Proton donor. Residues H351 and K457 contribute to the active site.

This sequence belongs to the GPI family.

It localises to the cytoplasm. The enzyme catalyses alpha-D-glucose 6-phosphate = beta-D-fructose 6-phosphate. It participates in carbohydrate biosynthesis; gluconeogenesis. The protein operates within carbohydrate degradation; glycolysis; D-glyceraldehyde 3-phosphate and glycerone phosphate from D-glucose: step 2/4. Catalyzes the reversible isomerization of glucose-6-phosphate to fructose-6-phosphate. In Synechococcus sp. (strain JA-2-3B'a(2-13)) (Cyanobacteria bacterium Yellowstone B-Prime), this protein is Glucose-6-phosphate isomerase.